The sequence spans 297 residues: Light-independent protochlorophyllide reductase iron-sulfur ATP-binding protein (297 aa).

ATP contacts are provided by residues 41–46 (GIGKST) and Lys70. A Mg(2+)-binding site is contributed by Ser45. 2 residues coordinate [4Fe-4S] cluster: Cys126 and Cys160. ATP-binding positions include 211–212 (NR) and 235–237 (PDL).

It belongs to the NifH/BchL/ChlL family. As to quaternary structure, homodimer. Protochlorophyllide reductase is composed of three subunits; BchL, BchN and BchB. Requires [4Fe-4S] cluster as cofactor.

The catalysed reaction is chlorophyllide a + oxidized 2[4Fe-4S]-[ferredoxin] + 2 ADP + 2 phosphate = protochlorophyllide a + reduced 2[4Fe-4S]-[ferredoxin] + 2 ATP + 2 H2O. The protein operates within porphyrin-containing compound metabolism; bacteriochlorophyll biosynthesis (light-independent). Its function is as follows. Component of the dark-operative protochlorophyllide reductase (DPOR) that uses Mg-ATP and reduced ferredoxin to reduce ring D of protochlorophyllide (Pchlide) to form chlorophyllide a (Chlide). This reaction is light-independent. The L component serves as a unique electron donor to the NB-component of the complex, and binds Mg-ATP. This chain is Light-independent protochlorophyllide reductase iron-sulfur ATP-binding protein, found in Methylorubrum extorquens (strain PA1) (Methylobacterium extorquens).